We begin with the raw amino-acid sequence, 628 residues long: MVMYARKQARLSDGCHDRRDSQPYQTLKYSSKSHPSSSDHRHDKMRDSTDPSPPNKMRRSNSPENKYIDSAGHGKAKSMHLHRVRERDGGTSFSPQENSHNHSAIHSSNSHSSTPSKTSDSAYDPADDWSEHISSSGKKYYYNCRTEVSQWEKPKEWLEREQRQKETSKVAVNSFPKDRDYRREAMQAAAAVEEKHSSDTSTMLPQNILSQTSRHNDRDYRLPRTDSHSSAAPVQQPVKAAVHPAAAPSTVPSSPFTVQPDHPPPKKSYDANGAALSKLPTPTSSIPVPKSERKETASSDKSSCTTPSTSSAPGLNLSAAPPSSSSSTVPVSPVPQSPIPPILQDPNLLRQLLPALQATLQLNNSNVDISKINEAAVTQASLQSILHKILTAGPSAFNITSLISQVAQLSAQAAQSNQSPMSLTSDASSPRSYVSPRISTPQTNTVPHKPLLSTPPVTSQPKVGTPGSKQGSSAQTASQQSSAADKSQGHEPTSPRNLQRSSSQRSPSPGPNHNSSTCASSTSAPQNSSARSSCSLTPTLAAYFNENLVKHVQGWPADHAEKQASRLREEAHNMGSIHMSEVCTELKNLRSLVRVCEIQATLREQRILFLRQQIKELEKLKNQNSFMV.

Disordered regions lie at residues 1 to 130 (MVMY…DDWS), 152 to 338 (EKPK…PQSP), and 417 to 532 (NQSP…SARS). The span at 37 to 49 (SSDHRHDKMRDST) shows a compositional bias: basic and acidic residues. Over residues 74–84 (GKAKSMHLHRV) the composition is skewed to basic residues. Residues 101–121 (NHSAIHSSNSHSSTPSKTSDS) are compositionally biased toward low complexity. Residues 123–156 (YDPADDWSEHISSSGKKYYYNCRTEVSQWEKPKE) form the WW domain. Basic and acidic residues-rich tracts occupy residues 152–168 (EKPKEWLEREQRQKETS) and 176–185 (PKDRDYRREA). The span at 199–213 (DTSTMLPQNILSQTS) shows a compositional bias: polar residues. Basic and acidic residues predominate over residues 214–227 (RHNDRDYRLPRTDS). 2 stretches are compositionally biased toward low complexity: residues 230–260 (SAAPVQQPVKAAVHPAAAPSTVPSSPFTVQP) and 299–331 (SDKSSCTTPSTSSAPGLNLSAAPPSSSSSTVPV). Positions 420–446 (PMSLTSDASSPRSYVSPRISTPQTNTV) are enriched in polar residues. The segment covering 467–486 (GSKQGSSAQTASQQSSAADK) has biased composition (low complexity). Polar residues predominate over residues 511–532 (PNHNSSTCASSTSAPQNSSARS). The stretch at 599-625 (QATLREQRILFLRQQIKELEKLKNQNS) forms a coiled coil.

The protein localises to the nucleus. Its function is as follows. Acts as a linker between gene transcription and histone H2B monoubiquitination at 'Lys-120' (H2BK120ub1). Positive regulator of amino acid starvation-induced autophagy. Positively regulates MTOR activity. May negatively regulate the ubiquitin proteasome pathway. The sequence is that of WW domain-containing adapter protein with coiled-coil (wac) from Xenopus tropicalis (Western clawed frog).